The primary structure comprises 155 residues: Gastrin-releasing peptide (155 aa).

An N-terminal signal peptide occupies residues 1–31 (MEGVLLFWKYRALFFLVLCSLVLCKVHLSQA). Residue Met60 is modified to Methionine amide. Residues 128 to 155 (FSGAEDNNLKEMLDYLYQMMNMKENTSS) constitute a propeptide that is removed on maturation.

The protein belongs to the bombesin/neuromedin-B/ranatensin family. Brain and stomach. In the stomach GRP was localized, at the base of the gastric pits, to occasional cells whose distribution and appearance were consistent with that of gut neuroendocrine cells.

The protein resides in the secreted. It is found in the cytoplasmic vesicle. Its subcellular location is the secretory vesicle lumen. Stimulates the release of gastrin and other gastrointestinal hormones. This Bombina orientalis (Oriental fire-bellied toad) protein is Gastrin-releasing peptide (grp).